Reading from the N-terminus, the 476-residue chain is Stromelysin-2 (476 aa).

Positions 1-17 are cleaved as a signal peptide; it reads MMHLAFLVLLCLPVCSA. A propeptide spans 18–98 (activation peptide); that stretch reads YPLSGAAKEE…PRCGVPDVGH (81 aa). Residues 89–96 carry the Cysteine switch motif; sequence PRCGVPDV. Residues C91, H167, D169, H182, H195, and H217 each coordinate Zn(2+). E218 is a catalytic residue. The Zn(2+) site is built by H221 and H227. 4 Hemopexin repeats span residues 286-335, 336-382, 384-432, and 433-476; these read PAKC…WPSL, PSYL…GFPP, IRKI…FPGV, and EPKV…WLHC. C289 and C476 are disulfide-bonded.

The protein belongs to the peptidase M10A family. Requires Zn(2+) as cofactor. Ca(2+) serves as cofactor.

The protein resides in the secreted. It localises to the extracellular space. It is found in the extracellular matrix. The enzyme catalyses Similar to stromelysin 1, but action on collagen types III, IV and V is weak.. Functionally, can degrade fibronectin, gelatins of type I, III, IV, and V; weakly collagens III, IV, and V. Activates procollagenase. This is Stromelysin-2 (MMP10) from Homo sapiens (Human).